Reading from the N-terminus, the 62-residue chain is Large ribosomal subunit protein bL28 (62 aa).

The interval 1–27 (MARECYITGRKARSGNKRSHAMNKSKR) is disordered. Positions 10–27 (RKARSGNKRSHAMNKSKR) are enriched in basic residues.

The protein belongs to the bacterial ribosomal protein bL28 family.

This chain is Large ribosomal subunit protein bL28, found in Shouchella clausii (strain KSM-K16) (Alkalihalobacillus clausii).